A 149-amino-acid chain; its full sequence is Large ribosomal subunit protein uL13 (149 aa).

The protein belongs to the universal ribosomal protein uL13 family. As to quaternary structure, part of the 50S ribosomal subunit.

This protein is one of the early assembly proteins of the 50S ribosomal subunit, although it is not seen to bind rRNA by itself. It is important during the early stages of 50S assembly. This Chlorobium chlorochromatii (strain CaD3) protein is Large ribosomal subunit protein uL13.